A 250-amino-acid chain; its full sequence is Protein lin-28 homolog B (250 aa).

Positions 1–26 (MAEGGASKGGGEEPGKLPEPAEEESQ) are disordered. Positions 29–102 (RGTGHCKWFN…GLESIRVTGP (74 aa)) constitute a CSD domain. Phosphoserine occurs at positions 54, 96, 105, and 110. The tract at residues 98 to 126 (RVTGPGGSPCLGSERRPKGKTLQKRKPKG) is disordered. The Bipartite nuclear localization signal motif lies at 112–125 (RRPKGKTLQKRKPK). Residues 114-125 (PKGKTLQKRKPK) are compositionally biased toward basic residues. CCHC-type zinc fingers lie at residues 127–144 (DRCY…ECSL) and 149–166 (KKCH…NCPH). Zn(2+)-binding residues include C129, C132, H137, C142, C151, C154, H159, and C164. Positions 169–250 (VAQPPASSQG…GPSVQKRKKT (82 aa)) are disordered. The span at 173–191 (PASSQGRQEAESQPCTSTL) shows a compositional bias: polar residues. A Phosphoserine modification is found at S203. Basic and acidic residues predominate over residues 210–219 (ARAEISERSG). Positions 220-231 (RSPQEASSTKSS) are enriched in polar residues. A Nucleolar localization signal motif is present at residues 239-250 (KKGPSVQKRKKT).

This sequence belongs to the lin-28 family. Expressed at high levels in the placenta and, at mucher lower, in testis and fetal liver. Isoform 1 is only detected in placenta and in moderately and poorly differentiated hepatocellular carcinoma cells (at protein level). Isoform 2 is detected in fetal liver, non-tumor liver tissues, as well as well-differentiated tumor tissues (at protein level). Tends to be up-regulated in triple-negative (ER-,PR-,HER2-) breast tumors, as well as in liver, ovarian, and thyroid carcinomas.

The protein resides in the nucleus. It is found in the nucleolus. It localises to the cytoplasm. Functionally, suppressor of microRNA (miRNA) biogenesis, including that of let-7 and possibly of miR107, miR-143 and miR-200c. Binds primary let-7 transcripts (pri-let-7), including pri-let-7g and pri-let-7a-1, and sequester them in the nucleolus, away from the microprocessor complex, hence preventing their processing into mature miRNA. Does not act on pri-miR21. The repression of let-7 expression is required for normal development and contributes to maintain the pluripotent state of embryonic stem cells by preventing let-7-mediated differentiation. When overexpressed, recruits ZCCHC11/TUT4 uridylyltransferase to pre-let-7 transcripts, leading to their terminal uridylation and degradation. This activity might not be relevant in vivo, as LIN28B-mediated inhibition of let-7 miRNA maturation appears to be ZCCHC11-independent. Interaction with target pre-miRNAs occurs via an 5'-GGAG-3' motif in the pre-miRNA terminal loop. Mediates MYC-induced let-7 repression. When overexpressed, isoform 1 stimulates growth of the breast adenocarcinoma cell line MCF-7. Isoform 2 has no effect on cell growth. This chain is Protein lin-28 homolog B (LIN28B), found in Homo sapiens (Human).